The primary structure comprises 249 residues: Low affinity immunoglobulin gamma Fc region receptor III-A (249 aa).

A signal peptide spans 1–16 (MWQLLPSTALLLVASA). Over 17–198 (RPQAADLPKA…IQGPPVPSTS (182 aa)) the chain is Extracellular. 2 consecutive Ig-like C2-type domains span residues 24-104 (PKAV…LEVH) and 119-172 (EGEP…YFCR). 2 disulfide bridges follow: Cys47–Cys88 and Cys127–Cys171. Asn55, Asn63, Asn166, and Asn179 each carry an N-linked (GlcNAc...) asparagine glycan. Residues 199–219 (ALLPFWPHIPFAVVMALLFAV) traverse the membrane as a helical segment. Residues 220-249 (DTGLYFAMQRHLHNSKRAWENSKVSWKQDP) are Cytoplasmic-facing.

As to quaternary structure, forms a heterooligomeric complex with ITAM-containing signaling subunits FCER1G. Interacts (via transmembrane domain) with signaling subunits; this interaction is a prerequisite for receptor complex expression on the cell surface and intracellular signal transduction. Binds the Fc region of antigen-complexed IgG.

It is found in the cell membrane. Receptor for the invariable Fc fragment of immunoglobulin gamma (IgG). Optimally activated upon binding of clustered antigen-IgG complexes displayed on cell surfaces, triggers lysis of antibody-coated cells, a process known as antibody-dependent cellular cytotoxicity (ADCC). Does not bind free monomeric IgG, thus avoiding inappropriate effector cell activation in the absence of antigenic trigger. Mediates IgG effector functions on natural killer (NK) cells. Binds antigen-IgG complexes generated upon infection and triggers NK cell-dependent cytokine production and degranulation to limit viral load and propagation. Fc-binding subunit that associates with FCER1G adapter to form functional signaling complexes. Following the engagement of antigen-IgG complexes, triggers phosphorylation of immunoreceptor tyrosine-based activation motif (ITAM)-containing adapter with subsequent activation of phosphatidylinositol 3-kinase signaling and sustained elevation of intracellular calcium that ultimately drive NK cell activation. Mediates enhanced ADCC in response to afucosylated IgGs. The chain is Low affinity immunoglobulin gamma Fc region receptor III-A from Mustela putorius furo (European domestic ferret).